We begin with the raw amino-acid sequence, 647 residues long: Exoribonuclease 2 (647 aa).

The RNB domain maps to 192-520 (REDLTALSFV…NHRLLKAIIS (329 aa)). The region spanning 565–647 (ESTFNAEIID…ETRNIVARPI (83 aa)) is the S1 motif domain.

It belongs to the RNR ribonuclease family. RNase II subfamily.

The protein resides in the cytoplasm. It carries out the reaction Exonucleolytic cleavage in the 3'- to 5'-direction to yield nucleoside 5'-phosphates.. Its function is as follows. Involved in mRNA degradation. Hydrolyzes single-stranded polyribonucleotides processively in the 3' to 5' direction. In Proteus mirabilis (strain HI4320), this protein is Exoribonuclease 2.